Reading from the N-terminus, the 253-residue chain is BRI3-binding protein (253 aa).

The next 4 membrane-spanning stretches (helical) occupy residues 19–39 (VLLP…PGAQ), 131–151 (ALVL…TLGF), 164–181 (FWLV…YILH), and 190–210 (AVLP…MGYW). Residues 219–253 (SPSVEEKLEHLENQVRLLNIRLNRVLENLDRSKDK) are a coiled coil. Ser250 bears the Phosphoserine mark.

In terms of assembly, interacts with LETMD1. Interacts with BRI3. Interacts with BRI3; the interaction is weak. Interacts with TMEM238L.

The protein resides in the mitochondrion outer membrane. Its function is as follows. Involved in tumorigenesis and may function by stabilizing p53/TP53. The protein is BRI3-binding protein of Mus musculus (Mouse).